Consider the following 144-residue polypeptide: ATP synthase epsilon chain (144 aa).

The protein belongs to the ATPase epsilon chain family. In terms of assembly, F-type ATPases have 2 components, CF(1) - the catalytic core - and CF(0) - the membrane proton channel. CF(1) has five subunits: alpha(3), beta(3), gamma(1), delta(1), epsilon(1). CF(0) has three main subunits: a, b and c.

It is found in the cell inner membrane. In terms of biological role, produces ATP from ADP in the presence of a proton gradient across the membrane. The protein is ATP synthase epsilon chain of Ectopseudomonas mendocina (strain ymp) (Pseudomonas mendocina).